A 226-amino-acid polypeptide reads, in one-letter code: Sugar fermentation stimulation protein homolog (226 aa).

Belongs to the SfsA family.

In Picrophilus torridus (strain ATCC 700027 / DSM 9790 / JCM 10055 / NBRC 100828 / KAW 2/3), this protein is Sugar fermentation stimulation protein homolog.